Reading from the N-terminus, the 273-residue chain is MSLTNTKTGFSVKDILDLPDTNDEEGSVAEGPEEENEGPEPAKRAGPLGQGALDAVQSLPLKNPFYDSSDNPYTRWLASTEGLQYSLHGLAAGAPPQDSSSKSPEPSADESPDNDKETPGGGGDAGKKRKRRVLFSKAQTYELERRFRQQRYLSAPEREHLASLIRLTPTQVKIWFQNHRYKMKRARAEKGMEVTPLPSPRRVAVPVLVRDGKPCHALKAQDLAAATFQAGIPFSAYSAQSLQHMQYNAQYSSASTPQYPTAHPLVQAQQWTW.

Disordered stretches follow at residues 1-56 (MSLT…LDAV) and 90-131 (LAAG…KRKR). A compositionally biased stretch (acidic residues) spans 20-38 (DTNDEEGSVAEGPEEENEG). A DNA-binding region (homeobox) is located at residues 128-187 (KRKRRVLFSKAQTYELERRFRQQRYLSAPEREHLASLIRLTPTQVKIWFQNHRYKMKRAR).

This sequence belongs to the NK-2 homeobox family. In terms of assembly, interacts with OLIG2.

It is found in the nucleus. Transcriptional activator involved in the development of insulin-producting beta cells in the endocrine pancreas. May also be involved in specifying diencephalic neuromeric boundaries, and in controlling the expression of genes that play a role in axonal guidance. Binds to elements within the NEUROD1 promoter. The protein is Homeobox protein Nkx-2.2 (NKX2-2) of Homo sapiens (Human).